Reading from the N-terminus, the 56-residue chain is Keratin-associated protein 20-1 (56 aa).

This sequence belongs to the KRTAP type 20 family. As to quaternary structure, interacts with hair keratins.

In terms of biological role, in the hair cortex, hair keratin intermediate filaments are embedded in an interfilamentous matrix, consisting of hair keratin-associated proteins (KRTAP), which are essential for the formation of a rigid and resistant hair shaft through their extensive disulfide bond cross-linking with abundant cysteine residues of hair keratins. The matrix proteins include the high-sulfur and high-glycine-tyrosine keratins. This chain is Keratin-associated protein 20-1 (KRTAP20-1), found in Homo sapiens (Human).